We begin with the raw amino-acid sequence, 327 residues long: Tyrosine--tRNA ligase (327 aa).

Tyrosine 33 serves as a coordination point for L-tyrosine. The 'HIGH' region motif lies at 38–46; the sequence is PSGVLHLGH. Tyrosine 154, glutamine 158, aspartate 161, and glutamine 176 together coordinate L-tyrosine. The 'KMSKS' region motif lies at 212 to 216; sequence KMSSS. Serine 215 contributes to the ATP binding site.

It belongs to the class-I aminoacyl-tRNA synthetase family. TyrS type 3 subfamily. In terms of assembly, homodimer.

The protein resides in the cytoplasm. The enzyme catalyses tRNA(Tyr) + L-tyrosine + ATP = L-tyrosyl-tRNA(Tyr) + AMP + diphosphate + H(+). In terms of biological role, catalyzes the attachment of tyrosine to tRNA(Tyr) in a two-step reaction: tyrosine is first activated by ATP to form Tyr-AMP and then transferred to the acceptor end of tRNA(Tyr). The sequence is that of Tyrosine--tRNA ligase from Halobacterium salinarum (strain ATCC 29341 / DSM 671 / R1).